A 97-amino-acid chain; its full sequence is Small ribosomal subunit protein bS6 (97 aa).

Belongs to the bacterial ribosomal protein bS6 family.

In terms of biological role, binds together with bS18 to 16S ribosomal RNA. The sequence is that of Small ribosomal subunit protein bS6 from Bifidobacterium longum (strain NCC 2705).